The primary structure comprises 283 residues: Thymidylate synthase (283 aa).

Arginine 22 provides a ligand contact to dUMP. Cysteine 160 (nucleophile) is an active-site residue. DUMP contacts are provided by residues 180-183, asparagine 191, and 221-223; these read RSCD and HIY. A (6R)-5,10-methylene-5,6,7,8-tetrahydrofolate-binding site is contributed by aspartate 183. Serine 282 contributes to the (6R)-5,10-methylene-5,6,7,8-tetrahydrofolate binding site.

The protein belongs to the thymidylate synthase family. Bacterial-type ThyA subfamily. As to quaternary structure, homodimer.

Its subcellular location is the cytoplasm. It carries out the reaction dUMP + (6R)-5,10-methylene-5,6,7,8-tetrahydrofolate = 7,8-dihydrofolate + dTMP. It functions in the pathway pyrimidine metabolism; dTTP biosynthesis. In terms of biological role, catalyzes the reductive methylation of 2'-deoxyuridine-5'-monophosphate (dUMP) to 2'-deoxythymidine-5'-monophosphate (dTMP) while utilizing 5,10-methylenetetrahydrofolate (mTHF) as the methyl donor and reductant in the reaction, yielding dihydrofolate (DHF) as a by-product. This enzymatic reaction provides an intracellular de novo source of dTMP, an essential precursor for DNA biosynthesis. The chain is Thymidylate synthase from Vibrio atlanticus (strain LGP32) (Vibrio splendidus (strain Mel32)).